The chain runs to 25 residues: Endoglucanase 1 (25 aa).

The interval 1–25 is disordered; the sequence is YDASLKPNLQIPQKNIPNNDAVNIK. A compositionally biased stretch (polar residues) spans 10 to 25; that stretch reads QIPQKNIPNNDAVNIK.

The catalysed reaction is Endohydrolysis of (1-&gt;4)-beta-D-glucosidic linkages in cellulose, lichenin and cereal beta-D-glucans.. In terms of biological role, this enzyme hydrolyzes cellotetraose, cellopentaose, and cellohexaose to cellobiose and cellotriose but does not hydrolyze cellobiose or cellotriose. This is Endoglucanase 1 from Ruminiclostridium josui (Clostridium josui).